Reading from the N-terminus, the 548-residue chain is Chaperonin GroEL (548 aa).

ATP contacts are provided by residues 30–33 (TLGP), lysine 51, 87–91 (DGTTT), glycine 415, 479–481 (NAA), and aspartate 495. The segment at 524 to 548 (LPKEDKSSDSSSSPAGGMGGMGGMM) is disordered. Residues 539–548 (GGMGGMGGMM) show a composition bias toward gly residues.

This sequence belongs to the chaperonin (HSP60) family. As to quaternary structure, forms a cylinder of 14 subunits composed of two heptameric rings stacked back-to-back. Interacts with the co-chaperonin GroES.

The protein localises to the cytoplasm. The catalysed reaction is ATP + H2O + a folded polypeptide = ADP + phosphate + an unfolded polypeptide.. Functionally, together with its co-chaperonin GroES, plays an essential role in assisting protein folding. The GroEL-GroES system forms a nano-cage that allows encapsulation of the non-native substrate proteins and provides a physical environment optimized to promote and accelerate protein folding. The sequence is that of Chaperonin GroEL from Buchnera aphidicola subsp. Acyrthosiphon pisum (strain 5A).